The chain runs to 938 residues: Ubiquitin carboxyl-terminal hydrolase Usp2 (938 aa).

Disordered regions lie at residues 1–53 (MMLD…KVGA), 91–117 (KVKT…NTSR), 130–254 (FNGN…ISTT), 273–297 (EQNQ…HRYP), 360–410 (LSGQ…NLQQ), and 500–610 (KDAT…EKSE). The segment covering 22-36 (STTKTSSVVATSASS) has biased composition (low complexity). Low complexity-rich tracts occupy residues 137 to 158 (TTTN…NTSN), 167 to 177 (STTATATSTST), 198 to 227 (MNGH…QRQQ), and 275 to 289 (NQVQ…PSSS). Positions 392–410 (ASRSNHGSQAGGSSSNLQQ) are enriched in polar residues. Composition is skewed to low complexity over residues 502–555 (ATTA…TARS) and 574–583 (TSRSSIGTSS). The span at 592 to 610 (HNSDDGYKTASSSRDEKSE) shows a compositional bias: basic and acidic residues. Positions 613–938 (CGLRNIGNTC…SAYILFYERT (326 aa)) constitute a USP domain. Cys-622 serves as the catalytic Nucleophile. Residues Cys-765, Cys-768, Cys-814, and Cys-817 each contribute to the Zn(2+) site. His-895 acts as the Proton acceptor in catalysis.

Belongs to the peptidase C19 family. As to quaternary structure, interacts (via N-terminus) with imd (via N-terminus). Interacts with Rpt6.

It carries out the reaction Thiol-dependent hydrolysis of ester, thioester, amide, peptide and isopeptide bonds formed by the C-terminal Gly of ubiquitin (a 76-residue protein attached to proteins as an intracellular targeting signal).. Its function is as follows. Hydrolase that deubiquitinates polyubiquitinated target proteins. Required for preventing the activation of the Toll signaling cascades under unchallenged conditions. Essential for bodily calcium homeostasis. Required for preventing the activation of the immune deficiency (Imd) signaling cascade under unchallenged conditions. Regulates the Imd pathway by specifically removing 'Lys-48'-linked ubiquitin from imd. Also promotes imd degradation probably by binding to imd and enhancing its association with the proteasome. This chain is Ubiquitin carboxyl-terminal hydrolase Usp2, found in Drosophila melanogaster (Fruit fly).